Reading from the N-terminus, the 223-residue chain is Glycerol-3-phosphate acyltransferase (223 aa).

5 helical membrane passes run 2-22, 52-72, 78-98, 112-132, and 153-173; these read LEIL…GLVI, WGVA…WLAF, PVFV…SCFM, IFLP…MLVI, and LAVS…AVVV. Residues 191–223 are disordered; the sequence is WLKSKNKGAAAGNAAEGDDTQNMNPQDAGRKDG.

It belongs to the PlsY family. Probably interacts with PlsX.

The protein resides in the cell inner membrane. It catalyses the reaction an acyl phosphate + sn-glycerol 3-phosphate = a 1-acyl-sn-glycero-3-phosphate + phosphate. It participates in lipid metabolism; phospholipid metabolism. Functionally, catalyzes the transfer of an acyl group from acyl-phosphate (acyl-PO(4)) to glycerol-3-phosphate (G3P) to form lysophosphatidic acid (LPA). This enzyme utilizes acyl-phosphate as fatty acyl donor, but not acyl-CoA or acyl-ACP. The polypeptide is Glycerol-3-phosphate acyltransferase (Desulfovibrio desulfuricans (strain ATCC 27774 / DSM 6949 / MB)).